A 490-amino-acid chain; its full sequence is Protein nucleotidyltransferase YdiU (490 aa).

Glycine 94, glycine 96, arginine 97, lysine 117, aspartate 129, glycine 130, arginine 180, and arginine 187 together coordinate ATP. The active-site Proton acceptor is the aspartate 256. Positions 257 and 266 each coordinate Mg(2+). An ATP-binding site is contributed by aspartate 266.

It belongs to the SELO family. Mg(2+) is required as a cofactor. It depends on Mn(2+) as a cofactor.

The enzyme catalyses L-seryl-[protein] + ATP = 3-O-(5'-adenylyl)-L-seryl-[protein] + diphosphate. The catalysed reaction is L-threonyl-[protein] + ATP = 3-O-(5'-adenylyl)-L-threonyl-[protein] + diphosphate. It catalyses the reaction L-tyrosyl-[protein] + ATP = O-(5'-adenylyl)-L-tyrosyl-[protein] + diphosphate. It carries out the reaction L-histidyl-[protein] + UTP = N(tele)-(5'-uridylyl)-L-histidyl-[protein] + diphosphate. The enzyme catalyses L-seryl-[protein] + UTP = O-(5'-uridylyl)-L-seryl-[protein] + diphosphate. The catalysed reaction is L-tyrosyl-[protein] + UTP = O-(5'-uridylyl)-L-tyrosyl-[protein] + diphosphate. In terms of biological role, nucleotidyltransferase involved in the post-translational modification of proteins. It can catalyze the addition of adenosine monophosphate (AMP) or uridine monophosphate (UMP) to a protein, resulting in modifications known as AMPylation and UMPylation. This Clostridium beijerinckii (strain ATCC 51743 / NCIMB 8052) (Clostridium acetobutylicum) protein is Protein nucleotidyltransferase YdiU.